The sequence spans 360 residues: Aminomethyltransferase (360 aa).

This sequence belongs to the GcvT family. In terms of assembly, the glycine cleavage system is composed of four proteins: P, T, L and H.

It catalyses the reaction N(6)-[(R)-S(8)-aminomethyldihydrolipoyl]-L-lysyl-[protein] + (6S)-5,6,7,8-tetrahydrofolate = N(6)-[(R)-dihydrolipoyl]-L-lysyl-[protein] + (6R)-5,10-methylene-5,6,7,8-tetrahydrofolate + NH4(+). The glycine cleavage system catalyzes the degradation of glycine. This Pseudomonas putida (strain ATCC 47054 / DSM 6125 / CFBP 8728 / NCIMB 11950 / KT2440) protein is Aminomethyltransferase.